We begin with the raw amino-acid sequence, 2492 residues long: Polyketide synthase 19 (2492 aa).

A Ketosynthase family 3 (KS3) domain is found at 12–463 (REPIAIVGTS…GTNAHAIVES (452 aa)). Active-site for beta-ketoacyl synthase activity residues include C202, H341, and H383. The segment at 571–866 (VFTGQGAQWA…LEVGPHPALK (296 aa)) is malonyl-CoA:ACP transacylase (MAT) domain. The tract at residues 967 to 1110 (HELLGRSVSH…GRIRLWLEQP (144 aa)) is N-terminal hotdog fold. The segment at 967-1270 (HELLGRSVSH…GVQMTAIGKP (304 aa)) is dehydratase (DH) domain. The region spanning 967–1273 (HELLGRSVSH…MTAIGKPPDR (307 aa)) is the PKS/mFAS DH domain. H1001 serves as the catalytic Proton acceptor; for dehydratase activity. Positions 1125 to 1273 (MSELNMAQVY…MTAIGKPPDR (149 aa)) are C-terminal hotdog fold. D1183 serves as the catalytic Proton donor; for dehydratase activity. The interval 1431–1604 (LGAIVKQLGH…KTTGFSGVDI (174 aa)) is C-methyltransferase (CMeT) domain. The segment at 2118–2293 (SYLLFGMTGD…AGSIVHISVL (176 aa)) is ketoreductase (KR) domain. Residues 2404–2479 (PILEKRFAQA…RVCDDVLVDW (76 aa)) enclose the Carrier domain. S2438 is modified (O-(pantetheine 4'-phosphoryl)serine).

Highly reducing polyketide synthase; part of the gene cluster that mediates the biosynthesis of fujikurins A-D, secondary metabolites playing a role during rice infection. The polyketide synthase PKS19 acts with the trans-enoyl reductase FFUJ_12240 and the polyketide transferase FFUJ_12241 to produce fujikurins, however, the biosynthesis pathway has not been identified yet. In Gibberella fujikuroi (strain CBS 195.34 / IMI 58289 / NRRL A-6831) (Bakanae and foot rot disease fungus), this protein is Polyketide synthase 19.